The chain runs to 135 residues: Transcription antitermination protein NusB (135 aa).

The protein belongs to the NusB family.

Its function is as follows. Involved in transcription antitermination. Required for transcription of ribosomal RNA (rRNA) genes. Binds specifically to the boxA antiterminator sequence of the ribosomal RNA (rrn) operons. This Shewanella halifaxensis (strain HAW-EB4) protein is Transcription antitermination protein NusB.